A 151-amino-acid chain; its full sequence is Ribonuclease H (151 aa).

The region spanning 2–143 (SSNVIEIYAD…ADALANKGVD (142 aa)) is the RNase H type-1 domain. 4 residues coordinate Mg(2+): Asp11, Glu49, Asp71, and Asp135.

Belongs to the RNase H family. As to quaternary structure, monomer. Requires Mg(2+) as cofactor.

The protein localises to the cytoplasm. The catalysed reaction is Endonucleolytic cleavage to 5'-phosphomonoester.. In terms of biological role, endonuclease that specifically degrades the RNA of RNA-DNA hybrids. This Methylobacillus flagellatus (strain ATCC 51484 / DSM 6875 / VKM B-1610 / KT) protein is Ribonuclease H.